The primary structure comprises 68 residues: Cytotoxic linear peptide IsCT (68 aa).

A signal peptide spans 1-23; it reads MKTQFAILLVALVLFQMFAQSDA. Phe-36 carries the post-translational modification Phenylalanine amide. The propeptide occupies 40–68; the sequence is GLSDLDGLDELFDGEISKADRDFLRELMR.

The protein belongs to the non-disulfide-bridged peptide (NDBP) superfamily. Short antimicrobial peptide (group 4) family. In terms of processing, isCTf is an enzymatic proteolytic cleavage product of IsCT by the proteases present in the venom. In terms of tissue distribution, expressed by the venom gland.

The protein resides in the secreted. It is found in the target cell membrane. Shows weak hemolytic activity and antibacterial activity against both Gram-positive and Gram-negative bacteria probably by forming pores in the cell membrane. IsCT adopts an amphipathic alpha-helical structure. Its function is as follows. Shows neither hemolytic, nor antibacterial activities, probably because it cannot adopt amphipathic alpha-helical structure. This Opisthacanthus madagascariensis (Scorpion) protein is Cytotoxic linear peptide IsCT.